A 1609-amino-acid chain; its full sequence is Factor-induced gene 2 protein (1609 aa).

The N-terminal stretch at 1–22 (MNSFASLGLIYSVVNLLTRVEA) is a signal peptide. An N-linked (GlcNAc...) asparagine glycan is attached at N29. 3 disordered regions span residues 129–165 (SSTLSSTAQPHRTSHSSSSFELPVTAPSSSSLPSSTS), 196–243 (SSEI…EPLS), and 266–312 (TIPT…NYDV). Polar residues predominate over residues 137–148 (QPHRTSHSSSSF). Positions 150–165 (LPVTAPSSSSLPSSTS) are enriched in low complexity. The segment covering 196 to 212 (SSEISGSTSPKSLESFD) has biased composition (polar residues). Low complexity-rich tracts occupy residues 213–243 (TTGTITSSYSPSPSSKNSNQTSLLSPLEPLS) and 274–285 (TSSLPPTLRSSS). A glycan (N-linked (GlcNAc...) asparagine) is linked at N231. Positions 286 to 312 (MAPTSGSDSISHNFTSPPSKTSGNYDV) are enriched in polar residues. Residues N298, N347, N386, N426, N495, N535, N661, N674, and N713 are each glycosylated (N-linked (GlcNAc...) asparagine). The interval 846–876 (ATSEATSTSTQVSATSATATASESSTTSQVS) is disordered. N-linked (GlcNAc...) asparagine glycans are attached at residues N889, N907, and N1079. Residues 1231–1243 (CTQDVPTQSSSPA) are compositionally biased toward polar residues. Positions 1231-1259 (CTQDVPTQSSSPASTLAYSPSVSTSSSSS) are disordered. Residues 1244 to 1259 (STLAYSPSVSTSSSSS) are compositionally biased toward low complexity. The N-linked (GlcNAc...) asparagine glycan is linked to N1400. Residue G1588 is the site of GPI-anchor amidated glycine attachment. Positions 1589-1609 (SASKFLCSKFFMIMVMVINFI) are cleaved as a propeptide — removed in mature form.

N-glycosylated.

It is found in the secreted. Its subcellular location is the cell wall. The protein localises to the membrane. Required for efficient mating. Plays a role in maintenance of cell wall integrity during mating. Important for mating cell projection shape and conjugation bridge diameter. Plays a role in cell fusion and nuclear migration. In Saccharomyces cerevisiae (strain ATCC 204508 / S288c) (Baker's yeast), this protein is Factor-induced gene 2 protein (FIG2).